We begin with the raw amino-acid sequence, 417 residues long: 1-deoxy-D-xylulose 5-phosphate reductoisomerase (417 aa).

NADPH-binding residues include T10, G11, S12, I13, G36, R37, N38, and N130. A 1-deoxy-D-xylulose 5-phosphate-binding site is contributed by K131. E132 contributes to the NADPH binding site. D156 is a binding site for Mn(2+). Residues S157, E158, S194, and H217 each coordinate 1-deoxy-D-xylulose 5-phosphate. E158 is a Mn(2+) binding site. An NADPH-binding site is contributed by G223. Residues S230, N235, K236, and E239 each contribute to the 1-deoxy-D-xylulose 5-phosphate site. Residue E239 participates in Mn(2+) binding.

This sequence belongs to the DXR family. It depends on Mg(2+) as a cofactor. The cofactor is Mn(2+).

It catalyses the reaction 2-C-methyl-D-erythritol 4-phosphate + NADP(+) = 1-deoxy-D-xylulose 5-phosphate + NADPH + H(+). Its pathway is isoprenoid biosynthesis; isopentenyl diphosphate biosynthesis via DXP pathway; isopentenyl diphosphate from 1-deoxy-D-xylulose 5-phosphate: step 1/6. Functionally, catalyzes the NADPH-dependent rearrangement and reduction of 1-deoxy-D-xylulose-5-phosphate (DXP) to 2-C-methyl-D-erythritol 4-phosphate (MEP). This Synechococcus sp. (strain CC9902) protein is 1-deoxy-D-xylulose 5-phosphate reductoisomerase.